We begin with the raw amino-acid sequence, 234 residues long: Immune-associated nucleotide-binding protein 2 (234 aa).

The AIG1-type G domain occupies 21–223 (KPVKNIVLVG…YTEDMYRNIK (203 aa)). GTP is bound by residues 30–38 (GRSVNGICT), S51, and N183.

The protein belongs to the TRAFAC class TrmE-Era-EngA-EngB-Septin-like GTPase superfamily. AIG1/Toc34/Toc159-like paraseptin GTPase family. IAN subfamily. Mostly expressed in pollen. Also detected in lateral roots and radicles.

This chain is Immune-associated nucleotide-binding protein 2, found in Arabidopsis thaliana (Mouse-ear cress).